Consider the following 1204-residue polypeptide: TPR repeat-containing protein DDB_G0287999 (1204 aa).

A compositionally biased stretch (low complexity) spans 32-48 (TTDTTTTTSTSTTTDTD). The disordered stretch occupies residues 32–55 (TTDTTTTTSTSTTTDTDTNSEKSN). TPR repeat units follow at residues 263 to 296 (SKGL…YKDL), 379 to 412 (NDSN…DQLY), and 583 to 617 (IQHF…GSVT). The tract at residues 360 to 387 (QPPPQEQQLMDDDSNSNSNNDSNNIIKN) is disordered. Over residues 374-387 (NSNSNNDSNNIIKN) the composition is skewed to low complexity. Disordered stretches follow at residues 639–660 (NNNN…NNNN) and 761–797 (DDND…KTTT). Over residues 766–778 (DNNNNNNNNNNNN) the composition is skewed to low complexity.

The sequence is that of TPR repeat-containing protein DDB_G0287999 from Dictyostelium discoideum (Social amoeba).